The following is a 119-amino-acid chain: Early E3 13.3 kDa protein (119 aa).

This chain is Early E3 13.3 kDa protein, found in Canine adenovirus serotype 1 (strain Utrecht) (CAdV-1).